Reading from the N-terminus, the 813-residue chain is MKISLKWLHDYVDVTEFFQKPEVLAEALTRGGLEVEEITNRAKDFNHVVIGHILEKDKHPNADKLSLCRVSTGEGVVHQIVCGAQNHKAGDRVIVALPGAVLPGNFAIKKSAVRGVDSAGMLCSLKELGLATESEGIAILPADAPVGKAYAEYGGYDDVTFELKVTANRADCLSHFGLAREVSTLFGKELKVPSSELKTNGKSSKSEIALDVKAFDLCPRYAGRFLKGVKVGPSPAWLKARLESVGMNSINNIVDVTNYVMLELGQPLHAFDAAFINGKKIIVDRAVAGEKFITLDGTEIALNGAELTIRDVNHPVCLAGVVGGKNSGVSDSTTEVFLEAAYFLPMSARKTSRSHGIDTDSSYRFARGVDPDGTLRGLNRAAALILEVAGGEAYADHHDFYPNPVKKAPVDITIKTVSDRLGYEAEEHKFVDFMKRLGCEINKKGETFTVLPPTFRFDIEQDMDLVEEYARLNGYEHIPEALPALAAAPSFQDKTFMLNRTTSELLRGEGFQQAVNFAFVGSKAQKAFLGSLEALKATGLAATEKEIRILNPLNEEMDVMRSSLSFGLFKNLNHNFHSGNMQGRLFEIGSTFFVKDDGSFAEGSRAGMAIWGRASNLWNKSLDYPVVYELKAAVEVLLKSLNISSYTWVTPANKSEVPEFLHQGQFAQLLVEGKKVGFIGTLHPLLLEDNKIRVPAALAELDLDQLYKGQPRPYRIQSVSKFPIVERDFAFVMPKALKVGDVLKDIRKAGAGLLLNVDVFDLYEGEKMEAGKKSVAIRIWLQDKNATLQETQINETTTKILESLKKNFDLSVR.

The region spanning 42–151 (AKDFNHVVIG…ADAPVGKAYA (110 aa)) is the tRNA-binding domain. In terms of domain architecture, B5 spans 405 to 480 (VKKAPVDITI…RLNGYEHIPE (76 aa)). Residues D458, D464, E467, and E468 each contribute to the Mg(2+) site. Residues 720–813 (SKFPIVERDF…LKKNFDLSVR (94 aa)) form the FDX-ACB domain.

Belongs to the phenylalanyl-tRNA synthetase beta subunit family. Type 1 subfamily. Tetramer of two alpha and two beta subunits. The cofactor is Mg(2+).

The protein resides in the cytoplasm. The enzyme catalyses tRNA(Phe) + L-phenylalanine + ATP = L-phenylalanyl-tRNA(Phe) + AMP + diphosphate + H(+). This is Phenylalanine--tRNA ligase beta subunit from Bdellovibrio bacteriovorus (strain ATCC 15356 / DSM 50701 / NCIMB 9529 / HD100).